Consider the following 419-residue polypeptide: Probable sodium/metabolite cotransporter BASS2, chloroplastic (419 aa).

The N-terminal 45 residues, 1–45, are a transit peptide targeting the chloroplast; it reads MAASTTCPARSMASVSRALRPRPHAAIASAAVRTAARLGGGLGIV. The next 9 membrane-spanning stretches (helical) occupy residues 106–126, 137–157, 170–190, 194–214, 225–245, 259–279, 291–311, 323–343, and 384–404; these read IVELLTTLFPVWVILGTIIGI, TDLFTVGLGFLMLSMGLTLTF, VGVGFLAQYLIKPMLGFAIAM, LSAPLATGLILVSCCPGGQAS, VALSVLMTTCSTIGAIVMTPL, AAGLAISTFQVVLLPTIVGVL, IISITPLIGVLLTTLLCASPI, GQLIIPVALLHVAAFALGYWL, and VPSAVSVVCMALGGSALAVFW.

This sequence belongs to the bile acid:sodium symporter (BASS) (TC 2.A.28) family.

The protein localises to the membrane. It localises to the plastid. The protein resides in the chloroplast envelope. Functionally, may function as sodium-coupled metabolite transporter across the chloroplast envelope. The chain is Probable sodium/metabolite cotransporter BASS2, chloroplastic (BASS2) from Oryza sativa subsp. japonica (Rice).